Reading from the N-terminus, the 1126-residue chain is NUT family member 1 (1126 aa).

7 disordered regions span residues 1-56, 334-367, 475-515, 537-559, 664-692, 755-810, and 932-1014; these read MASD…PVFS, IPKKAASKTRAPRRRQRKPQRPPVPEAPKEIPPE, EDAQ…QGAA, QEQTLGGPAGIHKDGNNLPSPSS, AGMLTRGREPPSVVSQKGSSRAVRGDDRG, ALNS…GPGL, and GEGR…EELS. The span at 30 to 55 shows a compositional bias: pro residues; the sequence is FAPPPPVPPDQPLWEPSPQPPIPPVF. Positions 338–353 are enriched in basic residues; sequence AASKTRAPRRRQRKPQ. A compositionally biased stretch (polar residues) spans 962–975; it reads KLTNGQGQGSTSPR. Phosphoserine is present on Ser973. The segment covering 987–1005 has biased composition (basic and acidic residues); that stretch reads TPIKEKCTSADRAKRRETE. A phosphoserine mark is found at Ser1022, Ser1025, and Ser1027. A disordered region spans residues 1032–1126; sequence PLSTRQASGG…SKRKKRRRSQ (95 aa). The residue at position 1042 (Gln1042) is an N5-methylglutamine. Residues 1106–1126 are compositionally biased toward basic residues; the sequence is PRKRRRDGFVTSKRKKRRRSQ.

The protein belongs to the NUT family. Methylated at Gln-1042 by N6AMT1. Post-translationally, phosphorylation on Ser-1022, Ser-1025 or Ser-1027 is important for cytoplasmic export.

It localises to the cytoplasm. Its subcellular location is the nucleus. In terms of biological role, plays a role in the regulation of proliferation. Regulates TERT expression by modulating SP1 binding to TERT promoter binding sites. This Mus musculus (Mouse) protein is NUT family member 1.